Here is a 435-residue protein sequence, read N- to C-terminus: Keratin, type I cytoskeletal 18 (435 aa).

A head region spans residues Ser-2 to Asn-84. The interval Glu-85–Ala-120 is coil 1A. The IF rod domain occupies Glu-85 to Leu-396. Residues Leu-121 to Thr-137 form a linker 1 region. Residues Leu-138–Leu-229 are coil 1B. A linker 12 region spans residues Arg-230–Val-253. The segment at Leu-254 to Gly-391 is coil 2. Positions Glu-392 to Lys-435 are tail.

The protein belongs to the intermediate filament family. Heterotetramer of two type I and two type II keratins. Keratin-18 associates with keratin-8. Phosphorylated. Post-translationally, proteolytically cleaved by caspases during epithelial cell apoptosis.

Functionally, when phosphorylated, plays a role in filament reorganization. This is Keratin, type I cytoskeletal 18 from Acipenser baerii (Siberian sturgeon).